We begin with the raw amino-acid sequence, 232 residues long: Cytochrome c oxidase subunit 2 (232 aa).

The Mitochondrial intermembrane segment spans residues methionine 1–serine 30. The chain crosses the membrane as a helical span at residues leucine 31–tyrosine 52. The Mitochondrial matrix portion of the chain corresponds to phenylalanine 53 to valine 69. Residues phenylalanine 70–tyrosine 89 form a helical membrane-spanning segment. The Mitochondrial intermembrane segment spans residues glycine 90–aspartate 232. Histidine 164, cysteine 199, glutamate 201, cysteine 203, histidine 207, and methionine 210 together coordinate Cu cation. Glutamate 201 contacts Mg(2+).

Belongs to the cytochrome c oxidase subunit 2 family. As to quaternary structure, component of the cytochrome c oxidase (complex IV, CIV), a multisubunit enzyme composed of a catalytic core of 3 subunits and several supernumerary subunits. The complex exists as a monomer or a dimer and forms supercomplexes (SCs) in the inner mitochondrial membrane with ubiquinol-cytochrome c oxidoreductase (cytochrome b-c1 complex, complex III, CIII). Requires Cu cation as cofactor.

It is found in the mitochondrion inner membrane. It carries out the reaction 4 Fe(II)-[cytochrome c] + O2 + 8 H(+)(in) = 4 Fe(III)-[cytochrome c] + 2 H2O + 4 H(+)(out). In terms of biological role, component of the cytochrome c oxidase, the last enzyme in the mitochondrial electron transport chain which drives oxidative phosphorylation. The respiratory chain contains 3 multisubunit complexes succinate dehydrogenase (complex II, CII), ubiquinol-cytochrome c oxidoreductase (cytochrome b-c1 complex, complex III, CIII) and cytochrome c oxidase (complex IV, CIV), that cooperate to transfer electrons derived from NADH and succinate to molecular oxygen, creating an electrochemical gradient over the inner membrane that drives transmembrane transport and the ATP synthase. Cytochrome c oxidase is the component of the respiratory chain that catalyzes the reduction of oxygen to water. Electrons originating from reduced cytochrome c in the intermembrane space (IMS) are transferred via the dinuclear copper A center (CU(A)) of subunit 2 and heme A of subunit 1 to the active site in subunit 1, a binuclear center (BNC) formed by heme A3 and copper B (CU(B)). The BNC reduces molecular oxygen to 2 water molecules using 4 electrons from cytochrome c in the IMS and 4 protons from the mitochondrial matrix. This chain is Cytochrome c oxidase subunit 2 (COII), found in Ascaris suum (Pig roundworm).